A 558-amino-acid chain; its full sequence is MAALTRDPQFQKLQQWYREHGSELNLRRLFDANKDRFNHFSLTLNTNHGHILVDYSKNLVTEDVMRMLVDLAKSRGVEAARERMFNGEKINYTEGRAVLHVALRNRSNTPILVDGKDVMPEVNKVLDKMKSFCQRVRSGDWKGYTGKTITDIINIGIGGSDLGPLMVTEALKPYSSGGPRVWYVSNIDGTHIAKTLAQLNPESSVSIIASKTFTTQETITNAETAKEWFLQTAKDPSAVAKHFVALSTNTTKVKEFGIDPQNMFEFWDWVGGRYSLWSAIGLSIALHVGFDNFEQLLSGAHWMDQHFRTTPLEKNAPVLLALLGIWYINCFGCETHAMLPYDQYLHRFAAYFQQGDMESNGKYITKSGTRVDHQTGPIVWGEPGTNGQHAFYQLIHQGTKMIPCDFLIPVQTQHPIRKGLHHKVLLANFLAQTEALMRGKSTEEARKELQAAGKSPEDLERLLPHKVFEGNRPTNSIVFTKLTPFMLGALVAMYEHKIFVQGIIWDINSFDQWGVELGKQLAKKIEPELDGSAQVTSHDASTNGLINFIKQQREARIQ.

An N-acetylalanine modification is found at alanine 2. Position 12 is an N6-acetyllysine (lysine 12). Position 34 is an N6-(2-hydroxyisobutyryl)lysine (lysine 34). Residue serine 107 is modified to Phosphoserine. A Phosphothreonine modification is found at threonine 109. Lysine 142 carries the post-translational modification N6-acetyllysine. Residue 159 to 160 participates in D-glucose 6-phosphate binding; the sequence is GS. At serine 185 the chain carries Phosphoserine; by CK2. 210–215 is a binding site for D-glucose 6-phosphate; the sequence is SKTFTT. Threonine 250 carries the phosphothreonine modification. D-glucose 6-phosphate-binding residues include glutamine 354, glutamate 358, and histidine 389. Glutamate 358 acts as the Proton donor in catalysis. The active site involves histidine 389. Lysine 454 is modified (N6-acetyllysine; alternate). Residue lysine 454 is modified to N6-malonyllysine; alternate. N6-succinyllysine; alternate is present on lysine 454. At serine 455 the chain carries Phosphoserine. A D-glucose 6-phosphate-binding site is contributed by lysine 519. Lysine 519 is a catalytic residue.

The protein belongs to the GPI family. In terms of assembly, homodimer; in the catalytically active form. Monomer in the secreted form. In terms of processing, phosphorylation at Ser-185 by CK2 has been shown to decrease enzymatic activity and may contribute to secretion by a non-classical secretory pathway. Post-translationally, ISGylated.

It localises to the cytoplasm. The protein resides in the secreted. It carries out the reaction alpha-D-glucose 6-phosphate = beta-D-fructose 6-phosphate. It functions in the pathway carbohydrate degradation; glycolysis; D-glyceraldehyde 3-phosphate and glycerone phosphate from D-glucose: step 2/4. Functionally, in the cytoplasm, catalyzes the conversion of glucose-6-phosphate to fructose-6-phosphate, the second step in glycolysis, and the reverse reaction during gluconeogenesis. Besides it's role as a glycolytic enzyme, also acts as a secreted cytokine: acts as an angiogenic factor (AMF) that stimulates endothelial cell motility. Acts as a neurotrophic factor, neuroleukin, for spinal and sensory neurons. It is secreted by lectin-stimulated T-cells and induces immunoglobulin secretion. This is Glucose-6-phosphate isomerase from Pongo abelii (Sumatran orangutan).